The chain runs to 180 residues: ADP-ribosylation factor 4 (180 aa).

The N-myristoyl glycine moiety is linked to residue Gly2. Residues 24–31, 67–71, and 126–129 each bind GTP; these read GLDAAGKT, DVGGQ, and NKQD. Ser147 bears the Phosphoserine mark.

Belongs to the small GTPase superfamily. Arf family. As to quaternary structure, forms a complex containing RAB11A, ASAP1, RAB3IP, RAP11FIP3 and ARF4; the complex promotes preciliary trafficking; the complex binds to RHO in photoreceptor cells and promotes RHO ciliary transport.

It localises to the golgi apparatus. The protein resides in the membrane. In terms of biological role, GTP-binding protein that functions as an allosteric activator of the cholera toxin catalytic subunit, an ADP-ribosyltransferase. Involved in protein trafficking; may modulate vesicle budding and uncoating within the Golgi apparatus. Part of the ciliary targeting complex containing Rab11, ASAP1, Rabin8/RAB3IP, RAB11FIP3 and ARF4, which direct preciliary vesicle trafficking to mother centriole and ciliogenesis initiation. This is ADP-ribosylation factor 4 (ARF4) from Bos taurus (Bovine).